A 924-amino-acid chain; its full sequence is Hexokinase-3 (924 aa).

The disordered stretch occupies residues 1-27 (MAAIEPSGLHPGERDSSCPQEGIPRPS). Hexokinase domains follow at residues 27–471 (SGSL…MVTA) and 477–913 (ATHR…LVTR). The tract at residues 84–220 (HGTEQGDFLV…TYNIDVVAMV (137 aa)) is hexokinase small subdomain 1. 95–102 (ELGATGAS) serves as a coordination point for ATP. 95–104 (ELGATGASLR) contacts D-glucose 6-phosphate. D-glucose is bound by residues S168, 185–186 (TK), and 221–222 (ND). Residues 221–460 (NDTVGTMMGC…CDVSFIPSVD (240 aa)) form a hexokinase large subdomain 1 region. Residues D222 and T245 each coordinate D-glucose 6-phosphate. Residues N248, E273, and 304–307 (QRFE) contribute to the D-glucose site. 426–428 (GGR) provides a ligand contact to D-glucose 6-phosphate. ATP-binding positions include 438–439 (CI) and 542–547 (DLGGTN). The hexokinase small subdomain 2 stretch occupies residues 531-662 (DGSERGDFLA…AVELNVVAIV (132 aa)). 542-546 (DLGGT) serves as a coordination point for D-glucose 6-phosphate. D-glucose-binding positions include 610–611 (SF), 627–628 (TK), and 663–664 (ND). Positions 663 to 902 (NDTVGTMMSC…CTVTFLQSED (240 aa)) are hexokinase large subdomain 2. Residues D664 and T687 each contribute to the D-glucose 6-phosphate site. T687 is a binding site for ATP. Residues 689-690 (TN), E715, and E749 contribute to the D-glucose site. Residues 754–755 (GM), 791–795 (TKFLS), and 870–874 (TLYKL) contribute to the ATP site. Residues 868 to 870 (DGT) and S904 contribute to the D-glucose 6-phosphate site.

This sequence belongs to the hexokinase family.

It catalyses the reaction a D-hexose + ATP = a D-hexose 6-phosphate + ADP + H(+). It carries out the reaction D-fructose + ATP = D-fructose 6-phosphate + ADP + H(+). The enzyme catalyses D-glucose + ATP = D-glucose 6-phosphate + ADP + H(+). It participates in carbohydrate metabolism; hexose metabolism. The protein operates within carbohydrate degradation; glycolysis; D-glyceraldehyde 3-phosphate and glycerone phosphate from D-glucose: step 1/4. Hexokinase is an allosteric enzyme inhibited by its product D-glucose 6-phosphate. Catalyzes the phosphorylation of hexose, such as D-glucose and D-fructose, to hexose 6-phosphate (D-glucose 6-phosphate and D-fructose 6-phosphate, respectively). Mediates the initial step of glycolysis by catalyzing phosphorylation of D-glucose to D-glucose 6-phosphate. The chain is Hexokinase-3 from Rattus norvegicus (Rat).